Here is a 288-residue protein sequence, read N- to C-terminus: 4-hydroxy-tetrahydrodipicolinate synthase (288 aa).

Residue Thr42 coordinates pyruvate. Catalysis depends on Tyr129, which acts as the Proton donor/acceptor. Lys157 (schiff-base intermediate with substrate) is an active-site residue. Ile198 is a pyruvate binding site.

The protein belongs to the DapA family. As to quaternary structure, homotetramer; dimer of dimers.

Its subcellular location is the cytoplasm. It carries out the reaction L-aspartate 4-semialdehyde + pyruvate = (2S,4S)-4-hydroxy-2,3,4,5-tetrahydrodipicolinate + H2O + H(+). It participates in amino-acid biosynthesis; L-lysine biosynthesis via DAP pathway; (S)-tetrahydrodipicolinate from L-aspartate: step 3/4. Catalyzes the condensation of (S)-aspartate-beta-semialdehyde [(S)-ASA] and pyruvate to 4-hydroxy-tetrahydrodipicolinate (HTPA). In Chlamydia abortus (strain DSM 27085 / S26/3) (Chlamydophila abortus), this protein is 4-hydroxy-tetrahydrodipicolinate synthase.